Consider the following 307-residue polypeptide: Holliday junction branch migration complex subunit RuvB (307 aa).

Positions 1-167 are large ATPase domain (RuvB-L); the sequence is MKLQIKPPNN…FGMILNIDYY (167 aa). Residues Ile-5, Gly-48, Lys-51, Thr-52, Thr-53, 114–116, Arg-157, Tyr-167, and Arg-204 each bind ATP; that span reads DDF. Mg(2+) is bound at residue Thr-52. Positions 168–233 are small ATPAse domain (RuvB-S); sequence SNQEIERIVS…DLAALFKSLM (66 aa). A head domain (RuvB-H) region spans residues 236–307; sequence KNGLQSIDVQ…RTGRNYLTSC (72 aa). DNA-binding residues include Lys-289 and Arg-294.

The protein belongs to the RuvB family. As to quaternary structure, homohexamer. Forms an RuvA(8)-RuvB(12)-Holliday junction (HJ) complex. HJ DNA is sandwiched between 2 RuvA tetramers; dsDNA enters through RuvA and exits via RuvB. An RuvB hexamer assembles on each DNA strand where it exits the tetramer. Each RuvB hexamer is contacted by two RuvA subunits (via domain III) on 2 adjacent RuvB subunits; this complex drives branch migration. In the full resolvosome a probable DNA-RuvA(4)-RuvB(12)-RuvC(2) complex forms which resolves the HJ.

Its subcellular location is the cytoplasm. It catalyses the reaction ATP + H2O = ADP + phosphate + H(+). Functionally, the RuvA-RuvB-RuvC complex processes Holliday junction (HJ) DNA during genetic recombination and DNA repair, while the RuvA-RuvB complex plays an important role in the rescue of blocked DNA replication forks via replication fork reversal (RFR). RuvA specifically binds to HJ cruciform DNA, conferring on it an open structure. The RuvB hexamer acts as an ATP-dependent pump, pulling dsDNA into and through the RuvAB complex. RuvB forms 2 homohexamers on either side of HJ DNA bound by 1 or 2 RuvA tetramers; 4 subunits per hexamer contact DNA at a time. Coordinated motions by a converter formed by DNA-disengaged RuvB subunits stimulates ATP hydrolysis and nucleotide exchange. Immobilization of the converter enables RuvB to convert the ATP-contained energy into a lever motion, pulling 2 nucleotides of DNA out of the RuvA tetramer per ATP hydrolyzed, thus driving DNA branch migration. The RuvB motors rotate together with the DNA substrate, which together with the progressing nucleotide cycle form the mechanistic basis for DNA recombination by continuous HJ branch migration. Branch migration allows RuvC to scan DNA until it finds its consensus sequence, where it cleaves and resolves cruciform DNA. This is Holliday junction branch migration complex subunit RuvB from Mycoplasma pneumoniae (strain ATCC 29342 / M129 / Subtype 1) (Mycoplasmoides pneumoniae).